The chain runs to 344 residues: MLKKTLSAVAWLCIFLVAFVSHPVWPQKPPKRKTPAELTAATCCEEAKALQAQIANLSSLLSDLGKKQERDWVSVVMQVMELESSAKSMETRLTEAESKYSEMNNQIGIMQLQAAQTVTQTSADAIYDCSSLYQKNYRISGVYKLPPDDFLGSPELEVFCDMETSGGGWTIIQRRKSGLVSFYRDWKQYKQGFGSIRGDFWLGNDHIHRLSRRPTRLRVEMQDWEGNMRYAEYSHFVLGNELNSYRLFLGNYSGDVGNDALIYHNNTAFSTKDKDNDNCLDKCAQLRKGGYWYNCCTDSNLNGVYYRLGEHNKHLDGITWYGWHGSSYSLKRVEMKIRPEDFQP.

Positions 1–26 (MLKKTLSAVAWLCIFLVAFVSHPVWP) are cleaved as a signal peptide. A coiled-coil region spans residues 37–116 (ELTAATCCEE…IGIMQLQAAQ (80 aa)). Asn-56 is a glycosylation site (N-linked (GlcNAc...) asparagine). Residues 120–341 (QTSADAIYDC…RVEMKIRPED (222 aa)) form the Fibrinogen C-terminal domain. Residues Cys-129 and Cys-160 are joined by a disulfide bond. Residues Asn-251 and Asn-265 are each glycosylated (N-linked (GlcNAc...) asparagine). Residues Cys-283 and Cys-296 are joined by a disulfide bond.

In terms of assembly, homotetramer; disulfide-linked.

It localises to the secreted. In terms of biological role, has a role in the formation and organization of the extracellular matrix. In the eye, it functions as a mediator of dexamethasone-induced matrix deposition in the trabecular meshwork, the tissue responsible for the outflow of the ocular aqueous humor and for the maintenance of intraocular pressure. Is a negative regulator of angiogenesis in the cornea, and plays a major role in maintaining corneal avascularity and transparency. The protein is Angiopoietin-related protein 7 (ANGPTL7) of Bos taurus (Bovine).